The chain runs to 903 residues: Cell division cycle protein 48 homolog MJ1156 (903 aa).

Residues 220-227 (GPPGTGKT) and 493-500 (GPPGTGKT) each bind ATP.

It belongs to the AAA ATPase family. CDC48 subfamily.

The chain is Cell division cycle protein 48 homolog MJ1156 from Methanocaldococcus jannaschii (strain ATCC 43067 / DSM 2661 / JAL-1 / JCM 10045 / NBRC 100440) (Methanococcus jannaschii).